The following is a 499-amino-acid chain: Maturase K (499 aa).

Belongs to the intron maturase 2 family. MatK subfamily.

The protein localises to the plastid. It is found in the chloroplast. Functionally, usually encoded in the trnK tRNA gene intron. Probably assists in splicing its own and other chloroplast group II introns. This is Maturase K from Gymnocladus chinensis (Soap tree).